The sequence spans 468 residues: ATP synthase subunit beta (468 aa).

An ATP-binding site is contributed by glycine 155 to threonine 162.

It belongs to the ATPase alpha/beta chains family. F-type ATPases have 2 components, CF(1) - the catalytic core - and CF(0) - the membrane proton channel. CF(1) has five subunits: alpha(3), beta(3), gamma(1), delta(1), epsilon(1). CF(0) has three main subunits: a(1), b(2) and c(9-12). The alpha and beta chains form an alternating ring which encloses part of the gamma chain. CF(1) is attached to CF(0) by a central stalk formed by the gamma and epsilon chains, while a peripheral stalk is formed by the delta and b chains.

The protein resides in the cell membrane. It catalyses the reaction ATP + H2O + 4 H(+)(in) = ADP + phosphate + 5 H(+)(out). Functionally, produces ATP from ADP in the presence of a proton gradient across the membrane. The catalytic sites are hosted primarily by the beta subunits. The sequence is that of ATP synthase subunit beta from Streptococcus agalactiae serotype Ia (strain ATCC 27591 / A909 / CDC SS700).